A 321-amino-acid chain; its full sequence is Cytochrome c biogenesis protein CcsA (321 aa).

8 consecutive transmembrane segments (helical) span residues 9 to 29 (ILTH…LMTL), 44 to 64 (GIIS…IYSG), 71 to 91 (LYES…IPYL), 98 to 118 (LSVI…SCLS), 143 to 163 (MLLS…LLVI), 225 to 245 (IISL…VWAN), 260 to 280 (WAFI…NINF), and 288 to 308 (VASI…LLGI).

It belongs to the CcmF/CycK/Ccl1/NrfE/CcsA family. May interact with Ccs1.

Its subcellular location is the plastid. It is found in the chloroplast thylakoid membrane. In terms of biological role, required during biogenesis of c-type cytochromes (cytochrome c6 and cytochrome f) at the step of heme attachment. The sequence is that of Cytochrome c biogenesis protein CcsA from Dioscorea elephantipes (Elephant's foot yam).